Consider the following 316-residue polypeptide: ATP synthase gamma chain (316 aa).

This sequence belongs to the ATPase gamma chain family. As to quaternary structure, F-type ATPases have 2 components, CF(1) - the catalytic core - and CF(0) - the membrane proton channel. CF(1) has five subunits: alpha(3), beta(3), gamma(1), delta(1), epsilon(1). CF(0) has three main subunits: a, b and c.

Its subcellular location is the cellular thylakoid membrane. Functionally, produces ATP from ADP in the presence of a proton gradient across the membrane. The gamma chain is believed to be important in regulating ATPase activity and the flow of protons through the CF(0) complex. The sequence is that of ATP synthase gamma chain from Prochlorococcus marinus (strain NATL2A).